Here is a 321-residue protein sequence, read N- to C-terminus: Malate dehydrogenase (321 aa).

Residues 11 to 16 (GSGNIG) and Asp-35 contribute to the NAD(+) site. Substrate contacts are provided by Arg-84 and Arg-90. Residues Asn-97 and 120–122 (ITN) contribute to the NAD(+) site. Substrate-binding residues include Asn-122 and Arg-153. His-177 serves as the catalytic Proton acceptor.

The protein belongs to the LDH/MDH superfamily. MDH type 3 family.

It carries out the reaction (S)-malate + NAD(+) = oxaloacetate + NADH + H(+). In terms of biological role, catalyzes the reversible oxidation of malate to oxaloacetate. In Rickettsia peacockii (strain Rustic), this protein is Malate dehydrogenase.